The primary structure comprises 117 residues: Ribonuclease P protein component (117 aa).

It belongs to the RnpA family. As to quaternary structure, consists of a catalytic RNA component (M1 or rnpB) and a protein subunit.

The enzyme catalyses Endonucleolytic cleavage of RNA, removing 5'-extranucleotides from tRNA precursor.. Its function is as follows. RNaseP catalyzes the removal of the 5'-leader sequence from pre-tRNA to produce the mature 5'-terminus. It can also cleave other RNA substrates such as 4.5S RNA. The protein component plays an auxiliary but essential role in vivo by binding to the 5'-leader sequence and broadening the substrate specificity of the ribozyme. In Thermotoga maritima (strain ATCC 43589 / DSM 3109 / JCM 10099 / NBRC 100826 / MSB8), this protein is Ribonuclease P protein component.